Consider the following 430-residue polypeptide: Tapasin (430 aa).

The signal sequence occupies residues 1–15 (MAAGLRLLLAGLCWS). Over 16 to 399 (QFRVEDAASP…TEGPHLEDIT (384 aa)) the chain is Lumenal. C34 and C99 are disulfide-bonded. Residues 61–128 (GDAETPPEPG…PDARSPPTAG (68 aa)) are disordered. N-linked (GlcNAc...) asparagine glycosylation occurs at N78. The span at 101–111 (LNPTNPQTGSD) shows a compositional bias: polar residues. 2 consecutive Ig-like C1-type domains span residues 139-273 (PQYG…LQLH) and 278-382 (PKVT…MRVS). Cysteines 299 and 368 form a disulfide. A disordered region spans residues 316–342 (RAGGSGTSQSPRDTVMDSWTSGHRQAA). Over residues 322-338 (TSQSPRDTVMDSWTSGH) the composition is skewed to polar residues. Residues 400–417 (GLFLVAFVLCGLIRWLYP) traverse the membrane as a helical segment. The Cytoplasmic portion of the chain corresponds to 418 to 430 (KAARPKEETKKSQ).

In terms of assembly, interacts with TAP1 and is thus a subunit of the TAP complex. Interaction with TAP1 is TAP2 independent and is required for efficient peptide-TAP interaction. Obligatory mediator for the interaction between newly assembled MHC class I molecules, calreticulin, ERp57 and TAP. Up to 4 MHC class I/tapasin complexes bind to 1 TAP.

It is found in the endoplasmic reticulum membrane. Involved in the association of MHC class I with transporter associated with antigen processing (TAP) and in the assembly of MHC class I with peptide (peptide loading). The polypeptide is Tapasin (TAPBP) (Gallus gallus (Chicken)).